A 653-amino-acid polypeptide reads, in one-letter code: MSGQPPPPPPQQQPPPPPPPASAAAPATAPPGLAVGPGPAAGVPVPGLAAGSSAAAPFPHGDSALNEQEKELQRRLKRLYPAVDEQETPLPRSWSPKDKFSYIGLSQNNLRVHYKGHGKTPKDAASVRATHPIPAACGIYYFEVKIVSKGRDGYMGIGLSAQGVNMNRLPGWDKHSYGYHGDDGHSFCSSGTGQPYGPTFTTGDVIGCCVNLINNTCFYTKNGHSLGIAFTDLPPNLYPTVGLQTPGEVVDANFGQHPFVFDIEDYMREWRTKIQAQIDRFPIGDREGEWQTMIQKMVSSYLVHHGYCATAEAFARSTDQTVLEELASIKNRQRIQKLVLAGRMGEAIETTQQLYPSLLERNPNLLFTLKVRQFIEMVNGTDSEVRCLGGRSPKSQDSYPVSPRPFSSPSMSPSHGMSIHSLAPGKSSTAHFSGFESCSNGVISNKAHQSYCHSKHQLSSLTVPELNSLNVSRSQQVNNFTSNDVDMETDHYSNGVGETSSNGFLNGSSKHDHEMEDCDTEMEVDCSQLRRQLCGGSQAAIERMIHFGRELQAMSEQLRRECGKNTANKKMLKDAFSLLAYSDPWNSPVGNQLDPIQREPVCSALNSAILETHNLPKQPPLALAMGQATQCLGLMARSGVGSCAFATVEDYLH.

The span at 1 to 21 (MSGQPPPPPPQQQPPPPPPPA) shows a compositional bias: pro residues. The disordered stretch occupies residues 1-62 (MSGQPPPPPP…SAAAPFPHGD (62 aa)). A compositionally biased stretch (low complexity) spans 22-57 (SAAAPATAPPGLAVGPGPAAGVPVPGLAAGSSAAAP). Residues 72-259 (LQRRLKRLYP…VDANFGQHPF (188 aa)) form the B30.2/SPRY domain. One can recognise a LisH domain in the interval 290 to 322 (WQTMIQKMVSSYLVHHGYCATAEAFARSTDQTV). Residues 326-332 (LASIKNR) form an interaction with CALB1 region. One can recognise a CTLH domain in the interval 328 to 385 (SIKNRQRIQKLVLAGRMGEAIETTQQLYPSLLERNPNLLFTLKVRQFIEMVNGTDSEV). K330 carries the N6-acetyllysine modification. Residues 386 to 422 (RCLGGRSPKSQDSYPVSPRPFSSPSMSPSHGMSIHSL) are disordered. The segment covering 398 to 421 (SYPVSPRPFSSPSMSPSHGMSIHS) has biased composition (low complexity). S402 and S412 each carry phosphoserine. Residues 539 to 653 (AAIERMIHFG…AFATVEDYLH (115 aa)) form an interaction with FMR1 region.

It belongs to the RANBP9/10 family. As to quaternary structure, part of a complex consisting of RANBP9, MKLN1 and GID8. Identified in the CTLH complex that contains GID4, RANBP9 and/or RANBP10, MKLN1, MAEA, RMND5A (or alternatively its paralog RMND5B), GID8, ARMC8, WDR26 and YPEL5. Within this complex, MAEA, RMND5A (or alternatively its paralog RMND5B), GID8, WDR26, and RANBP9 and/or RANBP10 form the catalytic core, while GID4, MKLN1, ARMC8 and YPEL5 have ancillary roles. Interacts with GTP-bound Ran, AR, CDC2L1/p110C, CALB1, S100A7, USP11, SOS1 or SOS2, GID8, and FMR1. Interacts with the Dyrk kinases HIPK2, DYRK1A, and DYRK1B. Interacts with TP73 isoform Alpha but not with TP53. Interacts with the HGF receptor MET and the integrins ITGB1 and ITGB2, but not with ITGAL. Part of a complex consisting of RANBP9, RAN, DYRK1B and COPS5. Directly interacts with RANBP10. Interacts with YPEL5. Interacts with MKLN1. Interacts with DDX4. Interacts with NGFR. Interacts with Tex19.1 and, probably, Tex19.2. Phosphorylated in response to stress. Post-translationally, ubiquitinated. Polyubiquitination targets the protein for rapid degradation via the ubiquitin system. In terms of tissue distribution, ubiquitously expressed, with highest levels in maturating spermatocytes.

The protein localises to the cytoplasm. It localises to the cell membrane. It is found in the nucleus. Its function is as follows. May act as scaffolding protein, and as adapter protein to couple membrane receptors to intracellular signaling pathways. Acts as a mediator of cell spreading and actin cytoskeleton rearrangement. Core component of the CTLH E3 ubiquitin-protein ligase complex that selectively accepts ubiquitin from UBE2H and mediates ubiquitination and subsequent proteasomal degradation of the transcription factor HBP1. May be involved in signaling of ITGB2/LFA-1 and other integrins. Enhances HGF-MET signaling by recruiting Sos and activating the Ras pathway. Enhances dihydrotestosterone-induced transactivation activity of AR, as well as dexamethasone-induced transactivation activity of NR3C1, but not affect estrogen-induced transactivation. Stabilizes TP73 isoform Alpha, probably by inhibiting its ubiquitination, and increases its proapoptotic activity. Inhibits the kinase activity of DYRK1A and DYRK1B. Inhibits FMR1 binding to RNA. This Mus musculus (Mouse) protein is Ran-binding protein 9.